Reading from the N-terminus, the 147-residue chain is Prefoldin subunit alpha (147 aa).

The protein belongs to the prefoldin alpha subunit family. Heterohexamer of two alpha and four beta subunits.

It is found in the cytoplasm. Its function is as follows. Molecular chaperone capable of stabilizing a range of proteins. Seems to fulfill an ATP-independent, HSP70-like function in archaeal de novo protein folding. This chain is Prefoldin subunit alpha, found in Thermococcus onnurineus (strain NA1).